Here is a 397-residue protein sequence, read N- to C-terminus: MAIETVASTDAFKVLVAEVTAQEGYREPMAFGIARVDRGQKNAEKVLQANFPLINWKENFGSAAVFIKALQEAKCDVDFSGSEFVATINDNFVANAMAAFAPYLAEATGDSHKNVQVIKTLAKMEDIGKNFRIVFLFEDANPESVEAVYLKLYALSLRKAELRKVNLNGAFGILSNVAWVGNTPYELDYLRENEIEMKLNGTYPTVDSVDKFPRFLQHVIPDDNTRILEASKVRMGAQLAAGTTVMPGASYINFNAGTLGPVMVEGRISSSAIVGAGSDVGGGASILGVLSGTDGNPISIGENTLLGANSVTGLPLGDGCIVDAGITILAGTKIKIAPEELEKIKAANPDAKLDNKTTFKGEELQGLNGIHYRQNSLTGEIIARRSTREVKLNEDLH.

The Acyl-anhydride intermediate role is filled by E265. Succinyl-CoA is bound by residues R267, G282, S285, A308, 323 to 324 (DA), G331, K360, and 373 to 376 (RQNS).

This sequence belongs to the type 2 tetrahydrodipicolinate N-succinyltransferase family. Homotrimer.

The protein resides in the cytoplasm. The enzyme catalyses (S)-2,3,4,5-tetrahydrodipicolinate + succinyl-CoA + H2O = (S)-2-succinylamino-6-oxoheptanedioate + CoA. It participates in amino-acid biosynthesis; L-lysine biosynthesis via DAP pathway; LL-2,6-diaminopimelate from (S)-tetrahydrodipicolinate (succinylase route): step 1/3. Functionally, catalyzes the conversion of the cyclic tetrahydrodipicolinate (THDP) into the acyclic N-succinyl-L-2-amino-6-oxopimelate using succinyl-CoA. The polypeptide is 2,3,4,5-tetrahydropyridine-2,6-dicarboxylate N-succinyltransferase (Sulfurovum sp. (strain NBC37-1)).